The primary structure comprises 396 residues: Phosphoglycerate kinase (396 aa).

Substrate is bound by residues 21-23 (DFN), Arg36, 59-62 (HLGK), Arg119, and Arg156. ATP contacts are provided by residues Lys206, Gly294, Glu325, and 352–355 (GGDS).

The protein belongs to the phosphoglycerate kinase family. As to quaternary structure, monomer.

Its subcellular location is the cytoplasm. It catalyses the reaction (2R)-3-phosphoglycerate + ATP = (2R)-3-phospho-glyceroyl phosphate + ADP. Its pathway is carbohydrate degradation; glycolysis; pyruvate from D-glyceraldehyde 3-phosphate: step 2/5. The chain is Phosphoglycerate kinase from Listeria monocytogenes serotype 4b (strain CLIP80459).